The chain runs to 167 residues: Ribosome maturation factor RimM (167 aa).

The region spanning 94–165 (ENEFYYSDII…KIIITPMEGL (72 aa)) is the PRC barrel domain.

This sequence belongs to the RimM family. Binds ribosomal protein uS19.

The protein resides in the cytoplasm. Functionally, an accessory protein needed during the final step in the assembly of 30S ribosomal subunit, possibly for assembly of the head region. Essential for efficient processing of 16S rRNA. May be needed both before and after RbfA during the maturation of 16S rRNA. It has affinity for free ribosomal 30S subunits but not for 70S ribosomes. This Staphylococcus aureus (strain Mu3 / ATCC 700698) protein is Ribosome maturation factor RimM.